We begin with the raw amino-acid sequence, 63 residues long: Large ribosomal subunit protein bL32 (63 aa).

This sequence belongs to the bacterial ribosomal protein bL32 family.

This Lactobacillus delbrueckii subsp. bulgaricus (strain ATCC 11842 / DSM 20081 / BCRC 10696 / JCM 1002 / NBRC 13953 / NCIMB 11778 / NCTC 12712 / WDCM 00102 / Lb 14) protein is Large ribosomal subunit protein bL32.